We begin with the raw amino-acid sequence, 195 residues long: Imidazoleglycerol-phosphate dehydratase (195 aa).

The protein belongs to the imidazoleglycerol-phosphate dehydratase family.

It localises to the cytoplasm. The catalysed reaction is D-erythro-1-(imidazol-4-yl)glycerol 3-phosphate = 3-(imidazol-4-yl)-2-oxopropyl phosphate + H2O. It functions in the pathway amino-acid biosynthesis; L-histidine biosynthesis; L-histidine from 5-phospho-alpha-D-ribose 1-diphosphate: step 6/9. This chain is Imidazoleglycerol-phosphate dehydratase, found in Pelotomaculum thermopropionicum (strain DSM 13744 / JCM 10971 / SI).